Reading from the N-terminus, the 567-residue chain is Thiol:disulfide interchange protein DsbD (567 aa).

The first 19 residues, 1 to 19 (MAQRIFTLILLLCSTSAFA), serve as a signal peptide directing secretion. 2 cysteine pairs are disulfide-bonded: Cys122/Cys128 and Cys185/Cys307. The next 8 membrane-spanning stretches (helical) occupy residues 166–186 (LPFSALWALLIGIGIAFTPCV), 211–231 (LLAFIYVQGMALTYTALGLVV), 246–266 (YVLIGLAIVFTLLALSMFGLF), 299–319 (IAGLICSPCTTAPLSAILLYI), 326–346 (WLGGGTLYLYALGMGLPLMLV), 360–380 (WMAHVKTAFGFVILALPVFLL), 387–407 (AWGLRLWSLLGVAFFGWAFIT), and 418–438 (IVQIILLAAALISVRPLQDWA). The Thioredoxin domain occupies 435-567 (QDWAFGSPSA…FSAHLHDRQP (133 aa)). An intrachain disulfide couples Cys482 to Cys485.

This sequence belongs to the thioredoxin family. DsbD subfamily.

The protein resides in the cell inner membrane. The catalysed reaction is [protein]-dithiol + NAD(+) = [protein]-disulfide + NADH + H(+). The enzyme catalyses [protein]-dithiol + NADP(+) = [protein]-disulfide + NADPH + H(+). Required to facilitate the formation of correct disulfide bonds in some periplasmic proteins and for the assembly of the periplasmic c-type cytochromes. Acts by transferring electrons from cytoplasmic thioredoxin to the periplasm. This transfer involves a cascade of disulfide bond formation and reduction steps. The sequence is that of Thiol:disulfide interchange protein DsbD from Salmonella paratyphi A (strain ATCC 9150 / SARB42).